The primary structure comprises 1372 residues: Cell fusion protein fus1 (1372 aa).

Residues 104-522 enclose the GBD/FH3 domain; it reads LCPDDPNLVN…EQGNNAPGYS (419 aa). The SH3-binding signature appears at 802-817; sequence PFKAPPPAPLPPPAPP. Residues 868 to 1278 enclose the FH2 domain; that stretch reads PGELCNPSKR…AFLRLQALKA (411 aa).

Belongs to the formin homology family. BNI1 subfamily. Interacts with actin at the FH2 domain.

It localises to the cytoplasm. In terms of biological role, required for cell fusion. It associates with the pre-zygotic projection tips in conjugating cells. The chain is Cell fusion protein fus1 (fus1) from Schizosaccharomyces pombe (strain 972 / ATCC 24843) (Fission yeast).